The primary structure comprises 300 residues: Fluorinase (300 aa).

S-adenosyl-L-methionine-binding positions include D16, 21–23 (DDS), Y77, S158, D211, N216, 270–271 (SR), and 278–280 (RNA).

Belongs to the SAM hydrolase / SAM-dependent halogenase family. As to quaternary structure, homohexamer.

It catalyses the reaction fluoride + S-adenosyl-L-methionine = 5'-deoxy-5'-fluoroadenosine + L-methionine. It carries out the reaction chloride + S-adenosyl-L-methionine = 5'-chloro-5'-deoxyadenosine + L-methionine. Its activity is regulated as follows. Activity is severely inhibited by 1 mM Cu(2+) or Zn(2+). Functionally, catalyzes the formation of a C-F bond by combining S-adenosyl-L-methionine (SAM) and fluoride to generate 5'-fluoro-5'-deoxyadenosine (5'-FDA) and L-methionine. Probably involved in fluoroacetate (FAc) and 4-fluorothreonine (4-FT) biosynthesis. In vitro, can also catalyze the conversion of chloride and SAM to 5'-chloro-5'-deoxyadenosine (5'-CIDA) and L-methionine in the presence of L-amino acid oxidase. This chain is Fluorinase, found in Nocardia brasiliensis (strain ATCC 700358 / HUJEG-1).